The following is a 221-amino-acid chain: Iron-sulfur cluster repair protein YtfE (221 aa).

This sequence belongs to the RIC family. YtfE subfamily. As to quaternary structure, homodimer.

The protein localises to the cytoplasm. In terms of biological role, di-iron-containing protein involved in the repair of iron-sulfur clusters damaged by oxidative and nitrosative stress conditions. The protein is Iron-sulfur cluster repair protein YtfE of Edwardsiella ictaluri (strain 93-146).